A 57-amino-acid chain; its full sequence is uncharacterized protein (57 aa).

It localises to the plastid. This is an uncharacterized protein from Euglena longa (Euglenophycean alga).